We begin with the raw amino-acid sequence, 2444 residues long: Protein SON (2444 aa).

The residue at position 2 (Ala-2) is an N-acetylalanine. Lys-16 is subject to N6-acetyllysine. Positions 23–37 (ELSSGRSEGQLNGET) are enriched in polar residues. The disordered stretch occupies residues 23–58 (ELSSGRSEGQLNGETNPPIEGNQAGDTAASARSLPN). Residue Lys-64 forms a Glycyl lysine isopeptide (Lys-Gly) (interchain with G-Cter in SUMO2) linkage. The span at 79–88 (YKPDLKEASR) shows a compositional bias: basic and acidic residues. Positions 79–155 (YKPDLKEASR…GNLESDSFLK (77 aa)) are disordered. Position 94 is a phosphoserine (Ser-94). The segment covering 106 to 130 (KKSKKHKKHKNKKKKKKKEKEKKYK) has biased composition (basic residues). Positions 131 to 155 (RQPEESESKLKSHHDGNLESDSFLK) are enriched in basic and acidic residues. Phosphoserine occurs at positions 142, 150, 152, and 158. An N6-acetyllysine modification is found at Lys-284. Disordered regions lie at residues 301–358 (TLTI…ESLE) and 391–468 (GPPV…PEPP). Pro residues-rich tracts occupy residues 393 to 406 (PVTPVPELPGPSAT) and 420 to 439 (PELPGPPATVVPELPGPSVT). Thr-395 bears the Phosphothreonine mark. The tract at residues 721-850 (LASNTMDSQM…LATSSMDSQM (130 aa)) is 13 X 10 AA tandem repeats of L-A-[ST]-[NSG]-[TS]-MDSQM. The tract at residues 907–983 (DPYRLAQDPY…IAPRPYRLAP (77 aa)) is 11 X 7 AA tandem repeats of [DR]-P-Y-R-[LI][AG][QHP]. Arg-945 carries the post-translational modification Omega-N-methylarginine. Thr-954 is subject to Phosphothreonine. Position 993 is a phosphoserine (Ser-993). A run of 14 repeats spans residues 1001–1006 (ERSMMS), 1009–1014 (ERSMMS), 1016–1021 (ERSMMS), 1025–1030 (ERSMMS), 1033–1038 (ERSMMS), 1041–1046 (ERSMMS), 1050–1055 (ERSMMS), 1058–1063 (ERSMMS), 1066–1071 (ERSMMS), 1075–1080 (DRSMMS), 1084–1089 (DRSMMS), 1095–1100 (DRSMMS), 1106–1111 (DRSMMS), and 1115–1120 (DRSMMS). Residues 1001 to 1120 (ERSMMSSYER…SSYTDRSMMS (120 aa)) are 14 X 6 AA repeats of [ED]-R-S-M-M-S. Arg-1002 carries the post-translational modification Asymmetric dimethylarginine. Arg-1017 is modified (asymmetric dimethylarginine). Ser-1030 and Ser-1038 each carry phosphoserine. 2 positions are modified to phosphoserine: Ser-1055 and Ser-1063. Ser-1077 carries the phosphoserine modification. Pro residues predominate over residues 1141–1168 (PPLPPEEPPTMPPLPPEEPPMTPPLPPE). Positions 1141–1173 (PPLPPEEPPTMPPLPPEEPPMTPPLPPEEPPEG) are 3 X 11 AA tandem repats of P-P-L-P-P-E-E-P-P-[TME]-[MTG]. Positions 1141 to 1213 (PPLPPEEPPT…PEPPVSQSEI (73 aa)) are disordered. Over residues 1177–1213 (STEQSALTADNTWSTEVTLSTGESLSQPEPPVSQSEI) the composition is skewed to polar residues. Residues Ser-1678, Ser-1723, Ser-1727, Ser-1772, Ser-1784, Ser-1791, Ser-1794, Ser-1807, and Ser-1808 each carry the phosphoserine modification. The tract at residues 1802–2072 (ERASESSSEE…RSPKRLTDLD (271 aa)) is disordered. Composition is skewed to basic and acidic residues over residues 1815–1826 (YEIFVKVKDTHE), 1834–1847 (RDKGEKEKKRDSSL), and 1855–1870 (KSSEHKSRKRTSESRS). Composition is skewed to basic residues over residues 1871–1934 (RARK…RKRS) and 1942–1973 (AARARSRTPSRRSRSHTPSRRRRSRSVGRRRS). 7 repeat units span residues 1950–1956 (PSRRSRS), 1959–1977 (PSRRRRSRSVGRRRSFSIS), 1978–1984 (PSRRSRT), 1985–1991 (PSRRSRT), 1992–1998 (PSRRSRT), 1999–2005 (PSRRSRT), and 2006–2012 (PSRRSRT). The tract at residues 1950–2019 (PSRRSRSHTP…SRTPSRRRRS (70 aa)) is 7 X 7 AA repeats of P-S-R-R-S-R-[TS]. Residues 1959 to 2030 (PSRRRRSRSV…SAVRRRSFSI (72 aa)) are 2 X 19 AA repeats of P-S-R-R-R-R-S-R-S-V-V-R-R-R-S-F-S-I-S. Phosphoserine occurs at positions 1973, 1975, and 1977. Positions 1980–2027 (RRSRTPSRRSRTPSRRSRTPSRRSRTPSRRSRTPSRRRRSRSAVRRRS) are enriched in basic residues. A 2-7; approximate repeat occupies 2013–2019 (PSRRRRS). The 3-2; approximate repeat unit spans residues 2020–2030 (RSAVRRRSFSI). Residues Ser-2027, Ser-2029, Ser-2031, Ser-2047, and Ser-2049 each carry the phosphoserine modification. The interval 2031-2057 (SPVRLRRSRTPLRRRFSRSPIRRKRSR) is 3 X tandem repeats of [ST]-P-[VLI]-R-[RL]-[RK]-[RF]-S-R. Over residues 2034–2056 (RLRRSRTPLRRRFSRSPIRRKRS) the composition is skewed to basic residues. The segment covering 2057 to 2072 (RSSERGRSPKRLTDLD) has biased composition (basic and acidic residues). At Lys-2073 the chain carries N6-acetyllysine; alternate. Lys-2073 is covalently cross-linked (Glycyl lysine isopeptide (Lys-Gly) (interchain with G-Cter in SUMO2); alternate). Residue Lys-2110 forms a Glycyl lysine isopeptide (Lys-Gly) (interchain with G-Cter in SUMO2) linkage. Ser-2147 carries the phosphoserine modification. Lys-2167 participates in a covalent cross-link: Glycyl lysine isopeptide (Lys-Gly) (interchain with G-Cter in SUMO2). Residue Thr-2181 is modified to Phosphothreonine. Positions 2192-2238 (EFPVSSGSQHRKKEADSVYGEWVPVEKNGEESKDDDNVFSSSLPSEP) are disordered. Residue Ser-2256 is modified to Phosphoserine. One can recognise a G-patch domain in the interval 2323 to 2369 (TGGMGAVLMRKMGWREGEGLGKNKEGNKEPILVDFKTDRKGLVAVGE). A DRBM domain is found at 2389 to 2444 (HPVSALMEICNKRRWQPPEFLLVHDSGPDHRKHFLFRVLRNGSPYQPNCMFFLNRY).

As to quaternary structure, interacts with SRSF2. Associates with the spliceosome. Interacts with USH1G. In terms of tissue distribution, widely expressed. Highly expressed in brain, heart, spleen, liver, skeletal muscle, kidney and testis.

The protein resides in the nucleus speckle. RNA-binding protein that acts as a mRNA splicing cofactor by promoting efficient splicing of transcripts that possess weak splice sites. Specifically promotes splicing of many cell-cycle and DNA-repair transcripts that possess weak splice sites, such as TUBG1, KATNB1, TUBGCP2, AURKB, PCNT, AKT1, RAD23A, and FANCG. Probably acts by facilitating the interaction between Serine/arginine-rich proteins such as SRSF2 and the RNA polymerase II. Also binds to DNA; binds to the consensus DNA sequence: 5'-GA[GT]AN[CG][AG]CC-3'. Essential for correct RNA splicing of multiple genes critical for brain development, neuronal migration and metabolism, including TUBG1, FLNA, PNKP, WDR62, PSMD3, PCK2, PFKL, IDH2, and ACY1. May also regulate the ghrelin signaling in hypothalamic neuron by acting as a negative regulator of GHSR expression. This is Protein SON (Son) from Mus musculus (Mouse).